The following is a 695-amino-acid chain: Probable serine/threonine-protein kinase abkD (695 aa).

A compositionally biased stretch (polar residues) spans 105 to 119 (TTKPQPCQAKPPSSK). The segment at 105–149 (TTKPQPCQAKPPSSKQQQQQQQQQQQQQQQQQQQQSKKKTSKDRL) is disordered. The stretch at 118-150 (SKQQQQQQQQQQQQQQQQQQQQSKKKTSKDRLR) forms a coiled coil. The segment covering 120–139 (QQQQQQQQQQQQQQQQQQQQ) has biased composition (low complexity). Residues 177–193 (TIASILAAIALIIYSYE) traverse the membrane as a helical segment. Residues 317 to 695 (DFDRLPIAAA…LIKDQMKKLG (379 aa)) form the Protein kinase domain. ATP is bound by residues 323–331 (IAAASLAQV) and K345. D477 serves as the catalytic Proton acceptor.

It belongs to the protein kinase superfamily. ADCK protein kinase family.

The protein localises to the membrane. The polypeptide is Probable serine/threonine-protein kinase abkD (abkD) (Dictyostelium discoideum (Social amoeba)).